A 704-amino-acid polypeptide reads, in one-letter code: Polyribonucleotide nucleotidyltransferase (704 aa).

Mg(2+) contacts are provided by Asp-491 and Asp-497. The KH domain occupies 558-617 (PNYAVIEINSDKIRDVIGKGGATIRQLTEDTGAVIDIDDNGTIRIFGENKAATKEAIRQI). The S1 motif domain maps to 627–695 (GKVYKGTVAR…NRGRIKLTMK (69 aa)).

This sequence belongs to the polyribonucleotide nucleotidyltransferase family. As to quaternary structure, component of the RNA degradosome, which is a multiprotein complex involved in RNA processing and mRNA degradation. Requires Mg(2+) as cofactor.

The protein resides in the cytoplasm. The enzyme catalyses RNA(n+1) + phosphate = RNA(n) + a ribonucleoside 5'-diphosphate. Involved in mRNA degradation. Catalyzes the phosphorolysis of single-stranded polyribonucleotides processively in the 3'- to 5'-direction. The protein is Polyribonucleotide nucleotidyltransferase of Psychrobacter sp. (strain PRwf-1).